The sequence spans 281 residues: ATP synthase gamma chain (281 aa).

It belongs to the ATPase gamma chain family. In terms of assembly, F-type ATPases have 2 components, CF(1) - the catalytic core - and CF(0) - the membrane proton channel. CF(1) has five subunits: alpha(3), beta(3), gamma(1), delta(1), epsilon(1). CF(0) has three main subunits: a, b and c.

It localises to the cell membrane. Produces ATP from ADP in the presence of a proton gradient across the membrane. The gamma chain is believed to be important in regulating ATPase activity and the flow of protons through the CF(0) complex. This is ATP synthase gamma chain from Clostridium pasteurianum.